The following is a 214-amino-acid chain: Large ribosomal subunit protein uL3 (214 aa).

Positions 133 to 155 (ATHGNSRSHRVPGSTGQCQSPGR) are disordered. Position 151 is an N5-methylglutamine (Q151).

It belongs to the universal ribosomal protein uL3 family. Part of the 50S ribosomal subunit. Forms a cluster with proteins L14 and L19. In terms of processing, methylated by PrmB.

In terms of biological role, one of the primary rRNA binding proteins, it binds directly near the 3'-end of the 23S rRNA, where it nucleates assembly of the 50S subunit. This Cellvibrio japonicus (strain Ueda107) (Pseudomonas fluorescens subsp. cellulosa) protein is Large ribosomal subunit protein uL3.